The sequence spans 626 residues: Chaperone protein HtpG (626 aa).

The tract at residues 1 to 339 is a; substrate-binding; sequence MSTNQETRGF…SNDLPLNVSR (339 aa). The interval 340–555 is b; the sequence is EILQDNKVTA…NDQMTTQMAK (216 aa). The tract at residues 556 to 626 is c; that stretch reads LFAAAGQPVP…FIKRVNNLLG (71 aa).

This sequence belongs to the heat shock protein 90 family. As to quaternary structure, homodimer.

The protein localises to the cytoplasm. Molecular chaperone. Has ATPase activity. This is Chaperone protein HtpG from Histophilus somni (strain 2336) (Haemophilus somnus).